The chain runs to 464 residues: Argininosuccinate lyase (464 aa).

It belongs to the lyase 1 family. Argininosuccinate lyase subfamily.

It is found in the cytoplasm. It catalyses the reaction 2-(N(omega)-L-arginino)succinate = fumarate + L-arginine. It functions in the pathway amino-acid biosynthesis; L-arginine biosynthesis; L-arginine from L-ornithine and carbamoyl phosphate: step 3/3. The protein is Argininosuccinate lyase of Pseudomonas aeruginosa (strain ATCC 15692 / DSM 22644 / CIP 104116 / JCM 14847 / LMG 12228 / 1C / PRS 101 / PAO1).